The chain runs to 48 residues: uncharacterized protein (48 aa).

The disordered stretch occupies residues 1–48; the sequence is MLFCNNNNNNNNNNNNNNNNNNNNNNNNNNNNNNNNNNNSSNNNNFSR.

This is an uncharacterized protein from Dictyostelium discoideum (Social amoeba).